A 359-amino-acid polypeptide reads, in one-letter code: NADPH HC-toxin reductase 2 (359 aa).

NADP(+)-binding positions include Arg39, 67–68 (DL), 87–89 (VAT), Tyr177, Lys181, 206–209 (LGLV), and Thr221. The active-site Proton donor is Lys181.

The protein belongs to the NAD(P)-dependent epimerase/dehydratase family.

In tandem with Hm1, NADPH-dependent HC toxin reductase (HCTR), which inactivates HC toxin, a cyclic tetrapeptide produced by the fungus Cochliobolus carbonum to permit infection and acting as an inhibitor of host histone deacetylases (HDACs), thus conferring resistance against C.carbonum race 1 in resistant cultivars (e.g. cv. B73 and cv. Wisconsin 22). Catalyzes the production of 8-hydroxy derivative of HC-toxin via the reduction of the 8-keto group of 2-amino-9,10-epoxy-8-oxo-decanoic acid, an amino acid of the HC-toxin. This chain is NADPH HC-toxin reductase 2, found in Zea mays (Maize).